Reading from the N-terminus, the 576-residue chain is Glucoamylase ARB_02327-1 (576 aa).

An N-terminal signal peptide occupies residues 1–20; that stretch reads MGLASTVSLALLGLCSLARA. Trp-141 contributes to the substrate binding site. N-linked (GlcNAc...) asparagine glycosylation is found at Asn-168 and Asn-192. Asp-197 serves as the catalytic Proton acceptor. Glu-200 serves as the catalytic Proton donor. 2 cysteine pairs are disulfide-bonded: Cys-243/Cys-470 and Cys-285/Cys-293. A CBM20 domain is found at 477–576; sequence GSGGDTVAVT…GSFTQNDTWR (100 aa). A disordered region spans residues 552–576; sequence TWESDPNRSITTSASGSFTQNDTWR. N-linked (GlcNAc...) asparagine glycosylation is found at Asn-558 and Asn-572.

It belongs to the glycosyl hydrolase 15 family.

The protein resides in the secreted. The catalysed reaction is Hydrolysis of terminal (1-&gt;4)-linked alpha-D-glucose residues successively from non-reducing ends of the chains with release of beta-D-glucose.. The chain is Glucoamylase ARB_02327-1 from Schizophyllum commune (strain H4-8 / FGSC 9210) (Split gill fungus).